A 229-amino-acid chain; its full sequence is Large ribosomal subunit protein uL1 (229 aa).

Belongs to the universal ribosomal protein uL1 family. As to quaternary structure, part of the 50S ribosomal subunit.

In terms of biological role, binds directly to 23S rRNA. The L1 stalk is quite mobile in the ribosome, and is involved in E site tRNA release. Its function is as follows. Protein L1 is also a translational repressor protein, it controls the translation of the L11 operon by binding to its mRNA. This chain is Large ribosomal subunit protein uL1, found in Rhodopseudomonas palustris (strain BisB5).